Reading from the N-terminus, the 478-residue chain is Cytochrome c-552 (478 aa).

An N-terminal signal peptide occupies residues 1 to 26 (MTRIKINARRIFSLLIPFFFFTSVHA). His-94 lines the heme c pocket. Heme is bound by residues Cys-122, Cys-125, and Lys-126. Residues Cys-160, Cys-163, His-164, Cys-209, Cys-212, and His-213 each contribute to the heme c site. Ca(2+) contacts are provided by Glu-215, Tyr-216, Lys-261, and Gln-263. Substrate is bound at residue Tyr-216. A substrate-binding site is contributed by His-264. Residues His-275, Cys-282, Cys-285, His-286, His-301, Cys-314, Cys-317, His-318, and His-393 each contribute to the heme c site.

Belongs to the cytochrome c-552 family. It depends on Ca(2+) as a cofactor. Heme c is required as a cofactor.

The protein localises to the periplasm. It carries out the reaction 6 Fe(III)-[cytochrome c] + NH4(+) + 2 H2O = 6 Fe(II)-[cytochrome c] + nitrite + 8 H(+). The protein operates within nitrogen metabolism; nitrate reduction (assimilation). In terms of biological role, catalyzes the reduction of nitrite to ammonia, consuming six electrons in the process. In Escherichia coli (strain ATCC 8739 / DSM 1576 / NBRC 3972 / NCIMB 8545 / WDCM 00012 / Crooks), this protein is Cytochrome c-552.